Consider the following 386-residue polypeptide: NADH-ubiquinone oxidoreductase chain 4 (386 aa).

The next 11 helical transmembrane spans lie at 8–28, 37–57, 61–81, 91–111, 133–153, 167–187, 189–209, 219–239, 247–267, 283–303, and 315–335; these read SEFH…YFLF, WPLS…LTFT, FILF…LILG, ASYY…FIII, IFLL…AHIW, MVLA…VQVL, IYSE…SCLI, LIAY…LMSC, ILMM…SYLF, ISLF…NMGL, and FFIG…ILCF.

This sequence belongs to the complex I subunit 4 family.

The protein resides in the mitochondrion membrane. It carries out the reaction a ubiquinone + NADH + 5 H(+)(in) = a ubiquinol + NAD(+) + 4 H(+)(out). Its function is as follows. Core subunit of the mitochondrial membrane respiratory chain NADH dehydrogenase (Complex I) that is believed to belong to the minimal assembly required for catalysis. Complex I functions in the transfer of electrons from NADH to the respiratory chain. The immediate electron acceptor for the enzyme is believed to be ubiquinone. In Artemia franciscana (Brine shrimp), this protein is NADH-ubiquinone oxidoreductase chain 4 (ND4).